The following is a 1063-amino-acid chain: Coiled-coil domain-containing protein 187 (1063 aa).

7 disordered regions span residues Met-1–Trp-41, Arg-62–His-184, Arg-219–Asp-278, Pro-300–Thr-319, Arg-392–Gly-484, Gly-496–Pro-539, and Trp-551–Lys-658. Residues Ser-111–Gly-124 are compositionally biased toward low complexity. Basic and acidic residues predominate over residues Arg-146–Arg-160. The segment covering Ala-163 to Ser-181 has biased composition (polar residues). Positions Arg-219–Ser-233 are enriched in basic and acidic residues. Basic and acidic residues-rich tracts occupy residues Thr-431 to Arg-442 and Ser-472 to Gly-484. A compositionally biased stretch (low complexity) spans Gln-508 to Pro-517. Residues His-816–Leu-851 are a coiled coil. The tract at residues Pro-1010–Arg-1030 is disordered.

The protein is Coiled-coil domain-containing protein 187 of Homo sapiens (Human).